Here is an 82-residue protein sequence, read N- to C-terminus: RNA-binding protein Hfq (82 aa).

A Sm domain is found at 11–71; it reads DTFLNHVRKT…ISTIMPGAPI (61 aa).

This sequence belongs to the Hfq family. In terms of assembly, homohexamer.

Its function is as follows. RNA chaperone that binds small regulatory RNA (sRNAs) and mRNAs to facilitate mRNA translational regulation in response to envelope stress, environmental stress and changes in metabolite concentrations. Also binds with high specificity to tRNAs. This Rhodopseudomonas palustris (strain TIE-1) protein is RNA-binding protein Hfq.